The primary structure comprises 1294 residues: MSYLREVATAVALLLPFILLNKFWRPNSKDSIVNDDDDSTSEVDAISDSTNPSGSFPSVEYEVFLSFRGPDTREQFTDFLYQSLRRYKIHTFRDDDELLKGKEIGPNLLRAIDQSKIYVPIISSGYADSKWCLMELAEIVRRQEEDPRRIILPIFYMVDPSDVRHQTGCYKKAFRKHANKFDGQTIQNWKDALKKVGDLKGWHIGKNDKQGAIADKVSADIWSHISKENLILETDELVGIDDHITAVLEKLSLDSENVTMVGLYGMGGIGKTTTAKAVYNKISSCFDCCCFIDNIRETQEKDGVVVLQKKLVSEILRIDSGSVGFNNDSGGRKTIKERVSRFKILVVLDDVDEKFKFEDMLGSPKDFISQSRFIITSRSMRVLGTLNENQCKLYEVGSMSKPRSLELFSKHAFKKNTPPSYYETLANDVVDTTAGLPLTLKVIGSLLFKQEIAVWEDTLEQLRRTLNLDEVYDRLKISYDALNPEAKEIFLDIACFFIGQNKEEPYYMWTDCNFYPASNIIFLIQRCMIQVGDDDEFKMHDQLRDMGREIVRREDVLPWKRSRIWSAEEGIDLLLNKKGSSKVKAISIPWGVKYEFKSECFLNLSELRYLHAREAMLTGDFNNLLPNLKWLELPFYKHGEDDPPLTNYTMKNLIIVILEHSHITADDWGGWRHMMKMAERLKVVRLASNYSLYGRRVRLSDCWRFPKSIEVLSMTAIEMDEVDIGELKKLKTLVLKFCPIQKISGGTFGMLKGLRELCLEFNWGTNLREVVADIGQLSSLKVLKTTGAKEVEINEFPLGLKELSTSSRIPNLSQLLDLEVLKVYDCKDGFDMPPASPSEDESSVWWKVSKLKSLQLEKTRINVNVVDDASSGGHLPRYLLPTSLTYLKIYQCTEPTWLPGIENLENLTSLEVNDIFQTLGGDLDGLQGLRSLEILRIRKVNGLARIKGLKDLLCSSTCKLRKFYITECPDLIELLPCELGGQTVVVPSMAELTIRDCPRLEVGPMIRSLPKFPMLKKLDLAVANITKEEDLDAIGSLEELVSLELELDDTSSGIERIVSSSKLQKLTTLVVKVPSLREIEGLEELKSLQDLYLEGCTSLGRLPLEKLKELDIGGCPDLTELVQTVVAVPSLRGLTIRDCPRLEVGPMIQSLPKFPMLNELTLSMVNITKEDELEVLGSLEELDSLELTLDDTCSSIERISFLSKLQKLTTLIVEVPSLREIEGLAELKSLRILYLEGCTSLERLWPDQQQLGSLKNLNVLDIQGCKSLSVDHLSALKTTLPPRARITWPDQPYR.

A signal peptide spans 1 to 29 (MSYLREVATAVALLLPFILLNKFWRPNSK). The disordered stretch occupies residues 34–54 (NDDDDSTSEVDAISDSTNPSG). One can recognise a TIR domain in the interval 59 to 221 (VEYEVFLSFR…AIADKVSADI (163 aa)). NAD(+) is bound by residues 68–73 (RGPDTR) and Gly-101. Glu-135 is an active-site residue. The region spanning 241 to 480 (DDHITAVLEK…VYDRLKISYD (240 aa)) is the NB-ARC domain. 11 LRR repeats span residues 246–268 (AVLEKLSLDSENVTMVGLYGMGG), 468–492 (LDEVYDRLKISYDALNPEAKEIFLD), 604–625 (LSELRYLHAREAMLTGDFNNLL), 626–650 (PNLKWLELPFYKHGEDDPPLTNYTM), 904–928 (LENLTSLEVNDIFQTLGGDLDGLQG), 1012–1039 (FPMLKKLDLAVANITKEEDLDAIGSLEE), 1063–1085 (LQKLTTLVVKVPSLREIEGLEEL), 1086–1109 (KSLQDLYLEGCTSLGRLPLEKLKE), 1179–1203 (LEELDSLELTLDDTCSSIERISFLS), 1205–1229 (LQKLTTLIVEVPSLREIEGLAELKS), and 1254–1278 (LKNLNVLDIQGCKSLSVDHLSALKT).

It belongs to the disease resistance TIR-NB-LRR family. Homooligomer; homooligomerization is required for activity.

It carries out the reaction NAD(+) + H2O = ADP-D-ribose + nicotinamide + H(+). The enzyme catalyses NADP(+) + H2O = ADP-D-ribose 2'-phosphate + nicotinamide + H(+). The catalysed reaction is NAD(+) = 2'cADPR + nicotinamide + H(+). TIR-NB-LRR receptor-like protein that confers resistance to the flax rust phytopathogenic fungus (M.lini). An NAD(+) hydrolase (NADase): in response to activation, catalyzes cleavage of NAD(+) into ADP-D-ribose (ADPR) and nicotinamide; NAD(+) cleavage triggering a defense system that promotes cell death. Also able to hydrolyze NADP(+), but not other NAD(+)-related molecules. Makes small amounts of 2' cyclic ADPR (2'cADPR). The polypeptide is Disease resistance protein L6 (Linum usitatissimum (Flax)).